Reading from the N-terminus, the 212-residue chain is 2-phospho-L-lactate guanylyltransferase (212 aa).

It belongs to the CofC family. In terms of assembly, homodimer.

The catalysed reaction is (2S)-2-phospholactate + GTP + H(+) = (2S)-lactyl-2-diphospho-5'-guanosine + diphosphate. It functions in the pathway cofactor biosynthesis; coenzyme F420 biosynthesis. Its function is as follows. Guanylyltransferase that catalyzes the activation of (2S)-2-phospholactate (2-PL) as (2S)-lactyl-2-diphospho-5'-guanosine, via the condensation of 2-PL with GTP. It is involved in the biosynthesis of coenzyme F420, a hydride carrier cofactor. The polypeptide is 2-phospho-L-lactate guanylyltransferase (Methanocorpusculum labreanum (strain ATCC 43576 / DSM 4855 / Z)).